Here is a 479-residue protein sequence, read N- to C-terminus: MGLLNYSNKVCLAPMVRIGELPMRLLALRYGANLVWGPEIVDKALLSGTPVERVVNDRINCIDFVKPPSNKVLFRVHPLEANRLIFQLGSASPELAVEAAKLVANDVAGIDLNCGCPKHFSVHAGMGAGLLKNQDRLVSILDALVNEIGKPYKISISCKIRLLETKEDTLKLVERICDTGVRAITVHCRTTPMRNTEPADRSYLSEIVGVCRNKDVSILVNGDVLSYNDGLDVIEKYGVDGVLIARAAERNVSCFRIEGPLSSFKVAEEFLKMALEVDNNFGNTKYCLNQIMQGSFRKNVRQLAQTAKTYEDLKKAFEIEYKHSDASSVCPTLEKEKSLVISFVDLPSFLESLLASNILKQLSRLHFTKIFAVSEEEDICKQLDDIHEKFLCHGIALSLISADNLASAIASAHLVICMEKDESIMNEAVCDQKITIRLPINSNTNEAVVECENKSMQSKHALDIIQERIKDLEEKAQVV.

Residues proline 14–valine 16 and glutamine 87 contribute to the FMN site. Residue cysteine 116 is the Proton donor of the active site. FMN is bound by residues lysine 159, histidine 187, asparagine 221–aspartate 223, and alanine 245–arginine 246.

The protein belongs to the Dus family. Dus2 subfamily. Requires FMN as cofactor.

The protein resides in the cytoplasm. Its subcellular location is the nucleus. The enzyme catalyses 5,6-dihydrouridine(20) in tRNA + NADP(+) = uridine(20) in tRNA + NADPH + H(+). The catalysed reaction is 5,6-dihydrouridine(20) in tRNA + NAD(+) = uridine(20) in tRNA + NADH + H(+). It catalyses the reaction a 5,6-dihydrouridine in mRNA + NAD(+) = a uridine in mRNA + NADH + H(+). It carries out the reaction a 5,6-dihydrouridine in mRNA + NADP(+) = a uridine in mRNA + NADPH + H(+). Its function is as follows. Catalyzes the NADPH-dependent synthesis of dihydrouridine, a modified base found in the D-loop of most tRNAs. Specifically modifies U20 in cytoplasmic tRNAs. Also able to mediate dihydrouridylation of some mRNAs, thereby affecting their translation. This Schizosaccharomyces pombe (strain 972 / ATCC 24843) (Fission yeast) protein is tRNA-dihydrouridine(20) synthase [NAD(P)+].